Consider the following 331-residue polypeptide: Glyceraldehyde-3-phosphate dehydrogenase 3 (331 aa).

NAD(+) is bound by residues 11–12, aspartate 33, and glutamate 77; that span reads RI. At serine 148 the chain carries Phosphoserine. 148–150 serves as a coordination point for D-glyceraldehyde 3-phosphate; sequence SCT. The active-site Nucleophile is cysteine 149. Serine 177 bears the Phosphoserine mark. Threonine 179 provides a ligand contact to D-glyceraldehyde 3-phosphate. A Phosphoserine modification is found at serine 200. Residues 208–209 and arginine 231 contribute to the D-glyceraldehyde 3-phosphate site; that span reads TG. Asparagine 313 contributes to the NAD(+) binding site.

Belongs to the glyceraldehyde-3-phosphate dehydrogenase family. As to quaternary structure, homotetramer.

It localises to the cytoplasm. It carries out the reaction D-glyceraldehyde 3-phosphate + phosphate + NAD(+) = (2R)-3-phospho-glyceroyl phosphate + NADH + H(+). Its pathway is carbohydrate degradation; glycolysis; pyruvate from D-glyceraldehyde 3-phosphate: step 1/5. This Kluyveromyces marxianus (Yeast) protein is Glyceraldehyde-3-phosphate dehydrogenase 3.